The sequence spans 633 residues: MA3 DOMAIN-CONTAINING TRANSLATION REGULATORY FACTOR 4 (633 aa).

4 consecutive MI domains span residues 56–177, 220–341, 351–472, and 514–633; these read DYKR…RAKK, ETKR…ERSD, RFKK…EISN, and DAKD…STDS. The Nuclear localization signal 1 signature appears at 94-101; that stretch reads VKRLVSMA. The Nuclear localization signal 2 motif lies at 389–396; sequence LKKLITLA.

Belongs to the PDCD4 family. In terms of assembly, binds to EIF4A1. The association with ribosomes is modulated by cellular energy status and TOR activity. Mostly expressed, at low levels, in rosette leaves and flower buds, and, to a lower extent, in roots, stems, cauline leaves and flowers.

Its subcellular location is the nucleus. It is found in the cytoplasm. It localises to the cytosol. In terms of biological role, involved in target of rapamycin (TOR)-regulated translation control, especially under energy-deficient conditions. This Arabidopsis thaliana (Mouse-ear cress) protein is MA3 DOMAIN-CONTAINING TRANSLATION REGULATORY FACTOR 4.